A 569-amino-acid polypeptide reads, in one-letter code: Endonuclease/exonuclease/phosphatase family domain-containing protein 1 (569 aa).

The interval 1–20 (MGSTLGCHRSIPRDPSDLSH) is disordered. The N-myristoyl glycine moiety is linked to residue G2. The span at 11–20 (IPRDPSDLSH) shows a compositional bias: basic and acidic residues. Phosphoserine is present on residues S16, S21, and S25. The HhH domain maps to 38-67 (ERLNINTATEEELMTLPGVTRAVARSIVEY). Phosphoserine is present on residues S106, S110, S160, and S173. The disordered stretch occupies residues 200–225 (SRPPSTHTNGGLTFTAKPHPSPTSLS). The segment covering 202 to 211 (PPSTHTNGGL) has biased composition (polar residues). Phosphothreonine is present on T265. A Phosphoserine modification is found at S428. The disordered stretch occupies residues 545–569 (SKKDAPRNGSGVALERSEANIKHER). A compositionally biased stretch (basic and acidic residues) spans 559–569 (ERSEANIKHER).

This Homo sapiens (Human) protein is Endonuclease/exonuclease/phosphatase family domain-containing protein 1 (EEPD1).